Consider the following 191-residue polypeptide: Thymidylate kinase (191 aa).

Residue 7–14 (GVDGAGKS) participates in ATP binding.

It belongs to the thymidylate kinase family.

It catalyses the reaction dTMP + ATP = dTDP + ADP. Its function is as follows. Phosphorylation of dTMP to form dTDP in both de novo and salvage pathways of dTTP synthesis. The chain is Thymidylate kinase (tmk) from Helicobacter pylori (strain ATCC 700392 / 26695) (Campylobacter pylori).